The following is a 141-amino-acid chain: Albumin-8 (141 aa).

The N-terminal stretch at 1–25 (MARFSIVFAAAGVLLLVAMAPVSEA) is a signal peptide. The propeptide occupies 26 to 38 (STTTIITTIIEEN). 4 disulfide bridges follow: Cys-49–Cys-100, Cys-62–Cys-89, Cys-90–Cys-132, and Cys-102–Cys-139.

Belongs to the 2S seed storage albumins family. In terms of assembly, heterodimer; disulfide-linked.

Its function is as follows. This is a 2S seed storage protein. This is Albumin-8 from Helianthus annuus (Common sunflower).